Reading from the N-terminus, the 2104-residue chain is MLIEAFINSLLQNLGIMMSFRDLVASPWILLVIAIPLCAFASSASMVREMLFRHKITENILKGTGVEELFNPFGIIIKYFLYFAILYAFIKYIRNNINVITEKVNFIRRVVSNPTGTTGRRGVLGRCVEQIVEYPTFFITMVYELQQIKNKKDLISKITMISSILKLPLGIWESTVGRMLDRPAIEGTEEMLEDVLPIVAMGLTITKTQIGDVPVESFLVNLDRNQKACENIIKRMQPLMIKMGMMKDSSYDTILQVAKEVNELSEAETWMKTTLKLNPNEFLQTQGAVRVGEIREKVATLRNKLNTLQTKELRSDKVVTECQKHLASLEVLLIEVKVLENSNQTRVKPVGVTIQGEKQIGKTNLVAILSRKICEYVQEHGDISFRNATKWTTWSRQCRDEFDTGYTGQEITYVDDAFQQKDNKDHLMWFTFISNTAVGTNQADLKQKGLPYRSKLVFTTCNKSPDKSVTIEDIEALHARFPHTICLRRNKNKMPKRGAIDESYDWVDFYYGPMSKAVSAIGSNTTSTLKTMSLSEIVKIIGDDLIIQNNFYNSTIKDVGITGQEQMDGAQLERRQRMRELRDHLLRIRSGDENMPFLDETFELNSRPIQTDEKFIPLKDNLDEEVMYGGISDQLLTRFDNIIERSLEGYDVESRELGVEPLTTLNHVRSNMLSYRAWNLINSMCINKTETFSAWLGRYITECVEGVAENLVTTKVKIRINPFTGLQLIAAKRMLQENKLIDMDEIPSTSANSYETVYDQIKNFVNDELSLMETDVVDLALAKISLSQIRSNIKRSTWLDVNDWILALKHKISGKSFAKHMDLYPSSLDSFLLTLKDWEVEDRIKFNSIYKQKVLFVQSRFSLYCWSPFISRGTRFVKVTSRFRELVDKLETGILFHEIKSVTNGIRWLGGAGNNGHVGERVRVIAHTAQFPKKSYPQNGFPINEELHREWIQLVINSDYKYHSLIGEEKVNILWNLIRLQPQREVENFKVYLEDLQASPPKTGTICAKVVNDIKAEVTSSYRQFNNYYTRLTKDGMHTLLSMLSRIGVPISDYWNDLLVDKAPAITAVTVGAITSLAIITIVKTFQYAIAGEEQSKGEKRAKQKNIATTKLQKLKFTLGKEQAEGDSIEHVKEFDGDVKFETIEKLFDHIDEHPNLNIVGLNLVAPENPIAIYAAREESYDFSFSEPRPPQWKKVVTFKEDSKRIISLQLRGEDTEDNILDEIEHAIKVSHGMPYAEWIFNGWFKKESNDNILYCVELDLVTAKTQSGPVGWTRAQTKNLKDLEIQLNKGKPIDVKSVVLGAPQASTQATDTMDVLVNKHLVKVHCLSYENLNNLALNGTQVFALASDNILIVPAHAARQNKWIRFSRATQTGHYGVAKVDERRIDFTRDIAIAIILTRAEAEQKLCELGYSIQLTNISKEKFHFPLITKYLLTADQSEVEWMNCTTLHYFAKNKTVGLGRTTSFQVSEFLCGNEYISKKLVACAQGLQSSVELSRLGDCGSPIVLASGKKAGKLIGFHGYHSPNLQTWYGAMLTVEDLGIINGVEEHFDDPWAKLITQGLPVDLPIGPEVEYVGNLIRPSLPVTNDSLDHWHKSPFADQFEEQLAPGRLNPYDSYIEGDLPTNLEGRKSLILGPNSEMAKTLPELDQGILDWIVDQLVVEQVATFKAENLLTKVSDDIDEMLDYALNGNVDNTYVRGMEVNKASGLPWSLSGSPKKSDFIDVDEATGVRSFKVNANGDALKNRVILKLQQAKMGNRILSFSSSKLKDQPIKIAQAKSGRTRVFHCIPVDLILFSGALYGPYKEAYTKAGLKCYHAVGIDPKSVGWQQLATYMTKHPNYFDADYKNYDKYLHRQVFKAVRKIQRSVIQQVCPDKWDKARAVEELDAIDTYVVDYQTVYKTNRGNKSGSYTTTIDNCLANDIYGLYAWVKTTGLRSLWDYRQNVSSVAFGDDIIKSVSDEYKDKYNYCTYRDVLNATGHIMTPGSKDGEEKPFTSFENLQFLKRGFKLENGMVLAPLLQRSIEGPFVWTDIREDQITVWVNLVQEQLIEAALWGEEYYNELCQKLKCGTNRTLNGALAVLLNTSWEVTFQKFCNRYYGIKRGDL.

2 helical membrane-spanning segments follow: residues 23 to 43 (LVAS…FASS) and 70 to 90 (FNPF…YAFI). A coiled-coil region spans residues 289 to 313 (VRVGEIREKVATLRNKLNTLQTKEL). The SF3 helicase domain maps to 329 to 501 (LEVLLIEVKV…NKMPKRGAID (173 aa)). A viral peptidase region spans residues 1499 to 1520 (GDCGSPIVLASGKKAGKLIGFH). The RdRp catalytic domain occupies 1838-1965 (PNYFDADYKN…SVSDEYKDKY (128 aa)).

In terms of processing, specific enzymatic cleavages in vivo yield mature proteins.

The protein localises to the membrane. The catalysed reaction is RNA(n) + a ribonucleoside 5'-triphosphate = RNA(n+1) + diphosphate. Its function is as follows. The peptidase activity is involved in polyprotein maturation, possibly along with hosts proteases. Transmembrane protein may be surface viral glycoprotein. RNA-directed RNA polymerase replicates the viral genome. This is Replication polyprotein from Drosophila melanogaster (Fruit fly).